The chain runs to 310 residues: Homoserine kinase (310 aa).

91–101 contributes to the ATP binding site; it reads PLARGLGSSAA.

Belongs to the GHMP kinase family. Homoserine kinase subfamily.

The protein localises to the cytoplasm. It catalyses the reaction L-homoserine + ATP = O-phospho-L-homoserine + ADP + H(+). It participates in amino-acid biosynthesis; L-threonine biosynthesis; L-threonine from L-aspartate: step 4/5. Its function is as follows. Catalyzes the ATP-dependent phosphorylation of L-homoserine to L-homoserine phosphate. The sequence is that of Homoserine kinase from Bacillus pumilus (strain SAFR-032).